Consider the following 399-residue polypeptide: S-adenosylmethionine synthase (399 aa).

ATP is bound at residue 135–140; that stretch reads GEGSTD.

It belongs to the AdoMet synthase 2 family. It depends on Mg(2+) as a cofactor.

The catalysed reaction is L-methionine + ATP + H2O = S-adenosyl-L-methionine + phosphate + diphosphate. Its pathway is amino-acid biosynthesis; S-adenosyl-L-methionine biosynthesis; S-adenosyl-L-methionine from L-methionine: step 1/1. Its function is as follows. Catalyzes the formation of S-adenosylmethionine from methionine and ATP. The sequence is that of S-adenosylmethionine synthase (mat) from Archaeoglobus fulgidus (strain ATCC 49558 / DSM 4304 / JCM 9628 / NBRC 100126 / VC-16).